The primary structure comprises 177 residues: ATP synthase subunit delta (177 aa).

Belongs to the ATPase delta chain family. In terms of assembly, F-type ATPases have 2 components, F(1) - the catalytic core - and F(0) - the membrane proton channel. F(1) has five subunits: alpha(3), beta(3), gamma(1), delta(1), epsilon(1). F(0) has three main subunits: a(1), b(2) and c(10-14). The alpha and beta chains form an alternating ring which encloses part of the gamma chain. F(1) is attached to F(0) by a central stalk formed by the gamma and epsilon chains, while a peripheral stalk is formed by the delta and b chains.

Its subcellular location is the cell inner membrane. Functionally, f(1)F(0) ATP synthase produces ATP from ADP in the presence of a proton or sodium gradient. F-type ATPases consist of two structural domains, F(1) containing the extramembraneous catalytic core and F(0) containing the membrane proton channel, linked together by a central stalk and a peripheral stalk. During catalysis, ATP synthesis in the catalytic domain of F(1) is coupled via a rotary mechanism of the central stalk subunits to proton translocation. Its function is as follows. This protein is part of the stalk that links CF(0) to CF(1). It either transmits conformational changes from CF(0) to CF(1) or is implicated in proton conduction. The protein is ATP synthase subunit delta of Aeromonas hydrophila subsp. hydrophila (strain ATCC 7966 / DSM 30187 / BCRC 13018 / CCUG 14551 / JCM 1027 / KCTC 2358 / NCIMB 9240 / NCTC 8049).